We begin with the raw amino-acid sequence, 343 residues long: Heat-inducible transcription repressor HrcA (343 aa).

Belongs to the HrcA family.

Functionally, negative regulator of class I heat shock genes (grpE-dnaK-dnaJ and groELS operons). Prevents heat-shock induction of these operons. The polypeptide is Heat-inducible transcription repressor HrcA (Bacillus licheniformis (strain ATCC 14580 / DSM 13 / JCM 2505 / CCUG 7422 / NBRC 12200 / NCIMB 9375 / NCTC 10341 / NRRL NRS-1264 / Gibson 46)).